Here is a 428-residue protein sequence, read N- to C-terminus: 3-phosphoshikimate 1-carboxyvinyltransferase (428 aa).

Residues K20, S21, and R25 each coordinate 3-phosphoshikimate. Residue K20 coordinates phosphoenolpyruvate. Phosphoenolpyruvate is bound by residues G92 and R120. The 3-phosphoshikimate site is built by S166, Q168, D314, and K341. Q168 lines the phosphoenolpyruvate pocket. Residue D314 is the Proton acceptor of the active site. 2 residues coordinate phosphoenolpyruvate: R345 and R387.

This sequence belongs to the EPSP synthase family. As to quaternary structure, monomer.

The protein resides in the cytoplasm. It carries out the reaction 3-phosphoshikimate + phosphoenolpyruvate = 5-O-(1-carboxyvinyl)-3-phosphoshikimate + phosphate. It functions in the pathway metabolic intermediate biosynthesis; chorismate biosynthesis; chorismate from D-erythrose 4-phosphate and phosphoenolpyruvate: step 6/7. Catalyzes the transfer of the enolpyruvyl moiety of phosphoenolpyruvate (PEP) to the 5-hydroxyl of shikimate-3-phosphate (S3P) to produce enolpyruvyl shikimate-3-phosphate and inorganic phosphate. The polypeptide is 3-phosphoshikimate 1-carboxyvinyltransferase (Listeria monocytogenes serovar 1/2a (strain ATCC BAA-679 / EGD-e)).